A 53-amino-acid polypeptide reads, in one-letter code: Lupus La protein homolog (53 aa).

Residues 1-13 (GKVEFQGKKTKFD) show a composition bias toward basic and acidic residues. Residues 1 to 53 (GKVEFQGKKTKFDSDDERNENGAAGPVKRAREETDKEEPASKQQKTENGAGDQ) form a disordered region. Lys8 bears the N6-acetyllysine mark. Thr10 is modified (phosphothreonine). Ser14 bears the Phosphoserine mark. Over residues 29–40 (RAREETDKEEPA) the composition is skewed to basic and acidic residues.

As to quaternary structure, interacts with DDX15. May interact with RUFY1. In terms of processing, phosphorylated.

It localises to the nucleus. Binds to the 3' poly(U) terminus of nascent RNA polymerase III transcripts, protecting them from exonuclease digestion and facilitating their folding and maturation. The chain is Lupus La protein homolog (SSB) from Oryctolagus cuniculus (Rabbit).